Here is a 300-residue protein sequence, read N- to C-terminus: Platelet-derived growth factor D (300 aa).

The CUB domain maps to 1–114; that stretch reads QVTGNGHVQS…PGFKIYYSFV (114 aa). C53 and C75 are joined by a disulfide. N220 carries N-linked (GlcNAc...) asparagine glycosylation.

The protein belongs to the PDGF/VEGF growth factor family. In terms of assembly, homodimer; disulfide-linked. Interacts with PDGFRB homodimers, and with heterodimers formed by PDGFRA and PDGFRB. Post-translationally, activated by proteolytic cleavage. Proteolytic removal of the N-terminal CUB domain releasing the core domain is necessary for unmasking the receptor-binding epitopes of the core domain. Cleavage after Arg-191 or Arg-193 by urokinase plasminogen activator gives rise to the active form.

It localises to the secreted. Growth factor that plays an essential role in the regulation of embryonic development, cell proliferation, cell migration, survival and chemotaxis. Potent mitogen for cells of mesenchymal origin. Plays an important role in wound healing. Induces macrophage recruitment, increased interstitial pressure, and blood vessel maturation during angiogenesis. Can initiate events that lead to a mesangial proliferative glomerulonephritis, including influx of monocytes and macrophages and production of extracellular matrix. In Oryctolagus cuniculus (Rabbit), this protein is Platelet-derived growth factor D (PDGFD).